The sequence spans 93 residues: DNA-binding protein HU 1 (93 aa).

This sequence belongs to the bacterial histone-like protein family. In terms of assembly, homodimer.

It is found in the cytoplasm. It localises to the nucleoid. In terms of biological role, histone-like DNA-binding protein which is capable of wrapping DNA to stabilize it, and thus to prevent its denaturation under extreme environmental conditions. This Streptomyces coelicolor (strain ATCC BAA-471 / A3(2) / M145) protein is DNA-binding protein HU 1 (hup1).